The chain runs to 145 residues: UPF0735 ACT domain-containing protein CLD_1535 (145 aa).

Positions threonine 69–methionine 144 constitute an ACT domain.

The protein belongs to the UPF0735 family.

This is UPF0735 ACT domain-containing protein CLD_1535 from Clostridium botulinum (strain Okra / Type B1).